A 351-amino-acid polypeptide reads, in one-letter code: AA9 family lytic polysaccharide monooxygenase A (351 aa).

Residues 1 to 20 form the signal peptide; it reads MSNKAATLLAALSGAALVAA. Cu(2+) contacts are provided by H21 and H107. C76 and C196 form a disulfide bridge. Residues H182 and Q191 each coordinate O2. Residue Y193 coordinates Cu(2+). In terms of domain architecture, CBM1 spans 315-351; the sequence is GVAPKWGQCGGNGWTGPTVCASGSTCTVLNPYYSQCI.

The protein belongs to the polysaccharide monooxygenase AA9 family. Cu(2+) is required as a cofactor.

It is found in the secreted. The enzyme catalyses [(1-&gt;4)-beta-D-glucosyl]n+m + reduced acceptor + O2 = 4-dehydro-beta-D-glucosyl-[(1-&gt;4)-beta-D-glucosyl]n-1 + [(1-&gt;4)-beta-D-glucosyl]m + acceptor + H2O.. Lytic polysaccharide monooxygenase (LPMO) that depolymerizes crystalline and amorphous polysaccharides via the oxidation of scissile alpha- or beta-(1-4)-glycosidic bonds, yielding C1 and C4 oxidation products. Catalysis by LPMOs requires the reduction of the active-site copper from Cu(II) to Cu(I) by a reducing agent and H(2)O(2) or O(2) as a cosubstrate. The protein is AA9 family lytic polysaccharide monooxygenase A of Podospora anserina (strain S / ATCC MYA-4624 / DSM 980 / FGSC 10383) (Pleurage anserina).